Here is a 368-residue protein sequence, read N- to C-terminus: tRNA/tmRNA (uracil-C(5))-methyltransferase (368 aa).

Residues glutamine 192, tyrosine 220, asparagine 225, glutamate 241, and aspartate 301 each coordinate S-adenosyl-L-methionine. The Nucleophile role is filled by cysteine 326. The Proton acceptor role is filled by glutamate 360.

This sequence belongs to the class I-like SAM-binding methyltransferase superfamily. RNA M5U methyltransferase family. TrmA subfamily.

It catalyses the reaction uridine(54) in tRNA + S-adenosyl-L-methionine = 5-methyluridine(54) in tRNA + S-adenosyl-L-homocysteine + H(+). The enzyme catalyses uridine(341) in tmRNA + S-adenosyl-L-methionine = 5-methyluridine(341) in tmRNA + S-adenosyl-L-homocysteine + H(+). Its function is as follows. Dual-specificity methyltransferase that catalyzes the formation of 5-methyluridine at position 54 (m5U54) in all tRNAs, and that of position 341 (m5U341) in tmRNA (transfer-mRNA). The polypeptide is tRNA/tmRNA (uracil-C(5))-methyltransferase (Actinobacillus pleuropneumoniae serotype 3 (strain JL03)).